Reading from the N-terminus, the 248-residue chain is 2-acetamido-2-deoxy-D-galactose-binding seed lectin 2 (248 aa).

Asparagine 119 carries N-linked (GlcNAc...) asparagine; partial glycosylation. Glutamate 128 and aspartate 130 together coordinate Mn(2+). Ca(2+) contacts are provided by aspartate 130, tyrosine 132, asparagine 134, and aspartate 138. Mn(2+) contacts are provided by aspartate 138 and histidine 144.

Belongs to the leguminous lectin family.

This Cytisus scoparius (Scotch broom) protein is 2-acetamido-2-deoxy-D-galactose-binding seed lectin 2.